Reading from the N-terminus, the 174-residue chain is Crossover junction endodeoxyribonuclease RuvC (174 aa).

Catalysis depends on residues Asp-8, Glu-68, and Asp-140. The Mg(2+) site is built by Asp-8, Glu-68, and Asp-140.

This sequence belongs to the RuvC family. As to quaternary structure, homodimer which binds Holliday junction (HJ) DNA. The HJ becomes 2-fold symmetrical on binding to RuvC with unstacked arms; it has a different conformation from HJ DNA in complex with RuvA. In the full resolvosome a probable DNA-RuvA(4)-RuvB(12)-RuvC(2) complex forms which resolves the HJ. It depends on Mg(2+) as a cofactor.

Its subcellular location is the cytoplasm. It catalyses the reaction Endonucleolytic cleavage at a junction such as a reciprocal single-stranded crossover between two homologous DNA duplexes (Holliday junction).. Its function is as follows. The RuvA-RuvB-RuvC complex processes Holliday junction (HJ) DNA during genetic recombination and DNA repair. Endonuclease that resolves HJ intermediates. Cleaves cruciform DNA by making single-stranded nicks across the HJ at symmetrical positions within the homologous arms, yielding a 5'-phosphate and a 3'-hydroxyl group; requires a central core of homology in the junction. The consensus cleavage sequence is 5'-(A/T)TT(C/G)-3'. Cleavage occurs on the 3'-side of the TT dinucleotide at the point of strand exchange. HJ branch migration catalyzed by RuvA-RuvB allows RuvC to scan DNA until it finds its consensus sequence, where it cleaves and resolves the cruciform DNA. The sequence is that of Crossover junction endodeoxyribonuclease RuvC from Legionella pneumophila subsp. pneumophila (strain Philadelphia 1 / ATCC 33152 / DSM 7513).